A 167-amino-acid chain; its full sequence is MLIRVEIPIDAPGIDALLRRSFESDAEAKLVHDLREDGFLTLGLVATDDEGQVIGYVAFSPVDVQGEDLQWVGMAPLAVDEKYRGQGLARQLVYEGLDSLNEFGYAAVVTLGDPALYSRFGFELAAHHDLRCRWPGTESAFQVHRLADDALNGVTGLVEYHEHFNRF.

Positions 1–148 (MLIRVEIPID…SAFQVHRLAD (148 aa)) constitute an N-acetyltransferase domain.

This sequence belongs to the acetyltransferase family.

This is an uncharacterized protein from Escherichia coli O157:H7.